The chain runs to 232 residues: MDLPIEDSHDSSTSPKGKQPTTAEKSATKKEDKVPVKKQKTRTVFSSTQLCVLNDRFQRQKYLSLQQMQELSNILNLSYKQVKTWFQNQRMKSKRWQKNNWLKNSNGVTQGCLVNPTGNLPMWSNQTWNNSIWSNETQNIQSWSNHSWNTQTWCTQSWNNQAWNSPFYNCGEESLQSCMQFQPNSPASDLEAALEAAGEGLNVIQQTARYFSTPQTMDLFLNYSTNMQPEDV.

The segment covering 1 to 10 has biased composition (basic and acidic residues); it reads MDLPIEDSHD. The disordered stretch occupies residues 1–39; it reads MDLPIEDSHDSSTSPKGKQPTTAEKSATKKEDKVPVKKQ. Residues 11–25 are compositionally biased toward polar residues; sequence SSTSPKGKQPTTAEK. The span at 26–35 shows a compositional bias: basic and acidic residues; sequence SATKKEDKVP. Tandem repeats lie at residues 123–127, 128–132, 133–137, 143–147, 148–152, 153–157, 158–162, and 163–167. Residues 123 to 167 form an 8 X repeats starting with a Trp in each unit region; sequence WSNQTWNNSIWSNETQNIQSWSNHSWNTQTWCTQSWNNQAWNSPF. The tract at residues 123-167 is sufficient for transactivation activity; the sequence is WSNQTWNNSIWSNETQNIQSWSNHSWNTQTWCTQSWNNQAWNSPF. Residues 168–232 are sufficient for strong transactivation activity; that stretch reads YNCGEESLQS…YSTNMQPEDV (65 aa).

It belongs to the Nanog homeobox family.

The protein resides in the nucleus. In terms of biological role, probable transcriptional regulator. The polypeptide is Putative homeobox protein NANOG2 (NANOGP1) (Pan troglodytes (Chimpanzee)).